Reading from the N-terminus, the 586-residue chain is MNYPINRQDYAAMFGPTVGDKIRLADTELLIEVEKDFTTYGEEVKFGGGKVIRDGMGQSPIINGDDDNTAVDTVITNALILDWWGIVKADIGIKQGKIFKIGKAGNPYTQDNIDIIIGPGTEVIAGEGRIVTAGAIDTHIHFICPQQIETALAAGITTMIGGGTGPAAGTTATTCTPGPWHIHRMLQSADAFPINLGFFGKGNTSKPEALEQQIKAGALGLKLHEDWGSTPAAIDTCLTVADLYDIQVAIHTDTLNEGGFVENTIAAFKNRVIHTFHTEGAGGGHAPDILKVCQYDYVLPASTNPTRPYTINTVAEHKDMLMVCHHLDPNIPEDVQFADSRIRPETIAAEDILHDLGAISIMSSDSQAMGRIGEVILRTWQTAHKMKLQRGWLAPNIDPETHYDQSEQDSDRGNDNYRAKRYIAKYTINPAIAHGISQYVGSIEEGKLADLCLWKPAFFGVKPELVIKGGMIVWAQMGDPNASISTPEPVYMRPMFGAFGGAIGATSMTFVSQAAIELEIPKQLGLTSLVAPVTHTRDISKAHLKHNYTTPEMRIDPETYEVWADGELLTCEPVSVLPMAQRYFLF.

In terms of domain architecture, Urease spans 134-586 (GAIDTHIHFI…LPMAQRYFLF (453 aa)). Positions 139, 141, and 222 each coordinate Ni(2+). Position 222 is an N6-carboxylysine (lysine 222). Position 224 (histidine 224) interacts with substrate. Residues histidine 251 and histidine 277 each contribute to the Ni(2+) site. Histidine 325 functions as the Proton donor in the catalytic mechanism. A Ni(2+)-binding site is contributed by aspartate 365.

The protein belongs to the metallo-dependent hydrolases superfamily. Urease alpha subunit family. As to quaternary structure, heterotrimer of UreA (gamma), UreB (beta) and UreC (alpha) subunits. Three heterotrimers associate to form the active enzyme. It depends on Ni cation as a cofactor. Post-translationally, carboxylation allows a single lysine to coordinate two nickel ions.

The protein resides in the cytoplasm. The catalysed reaction is urea + 2 H2O + H(+) = hydrogencarbonate + 2 NH4(+). The protein operates within nitrogen metabolism; urea degradation; CO(2) and NH(3) from urea (urease route): step 1/1. This is Urease subunit alpha from Gloeothece citriformis (strain PCC 7424) (Cyanothece sp. (strain PCC 7424)).